We begin with the raw amino-acid sequence, 328 residues long: Dolichyl-diphosphooligosaccharide--protein glycosyltransferase subunit MAGT1 (328 aa).

A signal peptide spans 1-22 (MLHKLLIVVFLVVCLHDMRLNG). The Extracellular portion of the chain corresponds to 23–177 (QKKKETLLSE…DVHIRVIRPP (155 aa)). Positions 40–168 (WVSKRAVVRL…LARWVADRTD (129 aa)) constitute a Thioredoxin domain. The N-linked (GlcNAc...) asparagine glycan is linked to asparagine 64. Cysteines 80 and 83 form a disulfide. The helical transmembrane segment at 178 to 198 (NYAGPLMLGLLLAFIGSLAYL) threads the bilayer. Residues 199–202 (RRNN) are Cytoplasmic-facing. The chain crosses the membrane as a helical span at residues 203-223 (LEFLFNKNVWAFSALCFVLIM). Residues 224–257 (TSGQMWNHIRGPPYAHKNPNTGQVSYIHGSSQAQ) are Extracellular-facing. A helical transmembrane segment spans residues 258-278 (FVAETHIVLLFNAAVTIGMVL). Residues 279–293 (LHEAATSGLDIVKRK) lie on the Cytoplasmic side of the membrane. A helical membrane pass occupies residues 294–314 (IMCVAGIGLVVLFFSWLLSVF). The Extracellular portion of the chain corresponds to 315–328 (RAKYHGYPYSFLFG).

Belongs to the OST3/OST6 family. Accessory component of the STT3B-containing form of the oligosaccharyltransferase (OST) complex.

The protein resides in the cell membrane. Its subcellular location is the endoplasmic reticulum. It is found in the endoplasmic reticulum membrane. It participates in protein modification; protein glycosylation. Accessory component of the STT3B-containing form of the N-oligosaccharyl transferase (OST) complex which catalyzes the transfer of a high mannose oligosaccharide from a lipid-linked oligosaccharide donor to an asparagine residue within an Asn-X-Ser/Thr consensus motif in nascent polypeptide chains. Involved in N-glycosylation of STT3B-dependent substrates. Specifically required for the glycosylation of a subset of acceptor sites that are near cysteine residues; in this function seems to act redundantly with TUSC3. In its oxidized form proposed to form transient mixed disulfides with a glycoprotein substrate to facilitate access of STT3B to the unmodified acceptor site. Also has oxidoreductase-independent functions in the STT3B-containing OST complex possibly involving substrate recognition. Could indirectly play a role in Mg(2+) transport. This chain is Dolichyl-diphosphooligosaccharide--protein glycosyltransferase subunit MAGT1, found in Danio rerio (Zebrafish).